The following is a 443-amino-acid chain: Chromosomal replication initiator protein DnaA (443 aa).

Positions 1 to 80 (MFLEEKLNLV…ETCGDKIPVE (80 aa)) are domain I, interacts with DnaA modulators. Residues 80–104 (EILIETKAASPLQSILEKSFDQKDF) form a domain II region. The domain III, AAA+ region stretch occupies residues 105-321 (QFNPDYTFET…GALNDIYLYK (217 aa)). Residues Gly148, Gly150, Lys151, and Thr152 each contribute to the ATP site. Residues 322–443 (KSYSLLFLNL…ERISSKYKLQ (122 aa)) are domain IV, binds dsDNA.

This sequence belongs to the DnaA family. As to quaternary structure, oligomerizes as a right-handed, spiral filament on DNA at oriC.

The protein localises to the cytoplasm. In terms of biological role, plays an essential role in the initiation and regulation of chromosomal replication. ATP-DnaA binds to the origin of replication (oriC) to initiate formation of the DNA replication initiation complex once per cell cycle. Binds the DnaA box (a 9 base pair repeat at the origin) and separates the double-stranded (ds)DNA. Forms a right-handed helical filament on oriC DNA; dsDNA binds to the exterior of the filament while single-stranded (ss)DNA is stabiized in the filament's interior. The ATP-DnaA-oriC complex binds and stabilizes one strand of the AT-rich DNA unwinding element (DUE), permitting loading of DNA polymerase. After initiation quickly degrades to an ADP-DnaA complex that is not apt for DNA replication. Binds acidic phospholipids. The chain is Chromosomal replication initiator protein DnaA from Leptospira interrogans serogroup Icterohaemorrhagiae serovar copenhageni (strain Fiocruz L1-130).